Here is a 360-residue protein sequence, read N- to C-terminus: Ribosomal RNA large subunit methyltransferase F (360 aa).

A disordered region spans residues 1-38; it reads MTRSTTPPMRAKHSSAKRSPSRSAAKVNPVSVKPNKPL. The segment covering 10–20 has biased composition (basic residues); sequence RAKHSSAKRSP.

It belongs to the methyltransferase superfamily. METTL16/RlmF family.

It is found in the cytoplasm. The catalysed reaction is adenosine(1618) in 23S rRNA + S-adenosyl-L-methionine = N(6)-methyladenosine(1618) in 23S rRNA + S-adenosyl-L-homocysteine + H(+). In terms of biological role, specifically methylates the adenine in position 1618 of 23S rRNA. In Shewanella frigidimarina (strain NCIMB 400), this protein is Ribosomal RNA large subunit methyltransferase F.